Here is a 469-residue protein sequence, read N- to C-terminus: Glutamate--tRNA ligase (469 aa).

Residues 9–19 carry the 'HIGH' region motif; it reads PSPTGFLHVGG. The Zn(2+) site is built by Cys98, Cys100, Cys125, and Asp127. A 'KMSKS' region motif is present at residues 236–240; the sequence is KLSKR. Position 239 (Lys239) interacts with ATP.

This sequence belongs to the class-I aminoacyl-tRNA synthetase family. Glutamate--tRNA ligase type 1 subfamily. In terms of assembly, monomer. Requires Zn(2+) as cofactor.

The protein localises to the cytoplasm. The catalysed reaction is tRNA(Glu) + L-glutamate + ATP = L-glutamyl-tRNA(Glu) + AMP + diphosphate. Catalyzes the attachment of glutamate to tRNA(Glu) in a two-step reaction: glutamate is first activated by ATP to form Glu-AMP and then transferred to the acceptor end of tRNA(Glu). The sequence is that of Glutamate--tRNA ligase from Shewanella sp. (strain MR-4).